The chain runs to 670 residues: Microtubule-associated protein ssm4 (670 aa).

In terms of domain architecture, CAP-Gly spans 23–65 (GSTDFESGIWLGVELLNGKGKNDGSVKGKRYFSCEKGKGIFVR). Coiled coils occupy residues 209–254 (KSEL…KNSI) and 404–582 (VKTR…KLAD). A Phosphoserine modification is found at serine 460. Threonine 606 bears the Phosphothreonine mark.

The protein localises to the cytoplasm. It localises to the cytoskeleton. It is found in the spindle. Functionally, binds to nuclear microtubules with the effect of either modifying their structure or function. This then promotes meiotic nuclear division. In Schizosaccharomyces pombe (strain 972 / ATCC 24843) (Fission yeast), this protein is Microtubule-associated protein ssm4 (ssm4).